Here is a 92-residue protein sequence, read N- to C-terminus: Large ribosomal subunit protein bL28 (92 aa).

The protein belongs to the bacterial ribosomal protein bL28 family.

The sequence is that of Large ribosomal subunit protein bL28 from Borrelia duttonii (strain Ly).